The primary structure comprises 224 residues: Ribose-5-phosphate isomerase A 1 (224 aa).

Residues 29–32 (SGST), 85–88 (DGAD), and 98–101 (KGGG) each bind substrate. Glu-107 functions as the Proton acceptor in the catalytic mechanism. Lys-125 contacts substrate.

The protein belongs to the ribose 5-phosphate isomerase family. Homodimer.

The enzyme catalyses aldehydo-D-ribose 5-phosphate = D-ribulose 5-phosphate. It functions in the pathway carbohydrate degradation; pentose phosphate pathway; D-ribose 5-phosphate from D-ribulose 5-phosphate (non-oxidative stage): step 1/1. Catalyzes the reversible conversion of ribose-5-phosphate to ribulose 5-phosphate. The polypeptide is Ribose-5-phosphate isomerase A 1 (Oceanobacillus iheyensis (strain DSM 14371 / CIP 107618 / JCM 11309 / KCTC 3954 / HTE831)).